The following is a 328-amino-acid chain: Peroxisomal adenine nucleotide transporter 1 (328 aa).

The next 6 helical transmembrane spans lie at 1–21 (MLTL…NIAV), 78–98 (TVTT…YTFI), 128–148 (LVLG…MAVV), 185–202 (LRTG…YASF), 226–246 (FILG…LIVA), and 277–297 (WKGV…LFAF). Solcar repeat units lie at residues 1–101 (MLTL…IRKS), 122–208 (PSTI…LKEV), and 220–304 (LSAV…LTKS).

Belongs to the mitochondrial carrier (TC 2.A.29) family.

Its subcellular location is the peroxisome membrane. Adenine nucleotide transporter involved in the uniport of ATP and adenine nucleotide hetero-exchange transport between the cytosol and the peroxisomal lumen. This transport is accompanied by a proton transport from the peroxisomal lumen to the cytosol. Transport of ATP into the peroxisome is required for beta-oxidation of medium-chain fatty acids. Required for growth on medium-chain fatty acids, pH gradient formation in peroxisomes and for normal peroxisome proliferation. The chain is Peroxisomal adenine nucleotide transporter 1 (ANT1) from Saccharomyces cerevisiae (strain ATCC 204508 / S288c) (Baker's yeast).